We begin with the raw amino-acid sequence, 357 residues long: Glutamine synthetase root isozyme B (357 aa).

Residues 19–99 enclose the GS beta-grasp domain; that stretch reads IIAEYIWVGG…VICDVYTPAG (81 aa). The GS catalytic domain occupies 106–357; the sequence is KRYNAAKIFS…AETTILWKKS (252 aa).

This sequence belongs to the glutamine synthetase family. In terms of assembly, homooctamer.

It is found in the cytoplasm. The catalysed reaction is L-glutamate + NH4(+) + ATP = L-glutamine + ADP + phosphate + H(+). The polypeptide is Glutamine synthetase root isozyme B (GS3B) (Pisum sativum (Garden pea)).